Reading from the N-terminus, the 506-residue chain is ATP synthase subunit alpha, chloroplastic (506 aa).

An ATP-binding site is contributed by 170–177; that stretch reads GDRQTGKT. Thr257 is modified (phosphothreonine).

It belongs to the ATPase alpha/beta chains family. F-type ATPases have 2 components, CF(1) - the catalytic core - and CF(0) - the membrane proton channel. CF(1) has five subunits: alpha(3), beta(3), gamma(1), delta(1), epsilon(1). CF(0) has four main subunits: a, b, b' and c.

It localises to the plastid. Its subcellular location is the chloroplast thylakoid membrane. The catalysed reaction is ATP + H2O + 4 H(+)(in) = ADP + phosphate + 5 H(+)(out). Functionally, produces ATP from ADP in the presence of a proton gradient across the membrane. The alpha chain is a regulatory subunit. This is ATP synthase subunit alpha, chloroplastic from Olimarabidopsis pumila (Dwarf rocket).